The primary structure comprises 307 residues: Glycerol-3-phosphate dehydrogenase [NAD(P)+] (307 aa).

The NADPH site is built by Phe11, Arg31, and Lys95. Residues Lys95, Gly121, and Ser123 each coordinate sn-glycerol 3-phosphate. An NADPH-binding site is contributed by Ala125. Sn-glycerol 3-phosphate contacts are provided by Lys176, Asp229, Ser239, Arg240, and Asn241. The active-site Proton acceptor is Lys176. Arg240 contributes to the NADPH binding site. Glu261 lines the NADPH pocket.

This sequence belongs to the NAD-dependent glycerol-3-phosphate dehydrogenase family.

The protein resides in the cytoplasm. It catalyses the reaction sn-glycerol 3-phosphate + NAD(+) = dihydroxyacetone phosphate + NADH + H(+). The enzyme catalyses sn-glycerol 3-phosphate + NADP(+) = dihydroxyacetone phosphate + NADPH + H(+). The protein operates within membrane lipid metabolism; glycerophospholipid metabolism. In terms of biological role, catalyzes the reduction of the glycolytic intermediate dihydroxyacetone phosphate (DHAP) to sn-glycerol 3-phosphate (G3P), the key precursor for phospholipid synthesis. The polypeptide is Glycerol-3-phosphate dehydrogenase [NAD(P)+] (Jannaschia sp. (strain CCS1)).